The primary structure comprises 789 residues: Protein translocase subunit SecA (789 aa).

Residues Gln85, 103 to 107 (GEGKT), and Asp492 each bind ATP.

Belongs to the SecA family. As to quaternary structure, monomer and homodimer. Part of the essential Sec protein translocation apparatus which comprises SecA, SecYEG and auxiliary proteins SecDF. Other proteins may also be involved.

It is found in the cell membrane. It localises to the cytoplasm. It carries out the reaction ATP + H2O + cellular proteinSide 1 = ADP + phosphate + cellular proteinSide 2.. Functionally, part of the Sec protein translocase complex. Interacts with the SecYEG preprotein conducting channel. Has a central role in coupling the hydrolysis of ATP to the transfer of proteins into and across the cell membrane, serving as an ATP-driven molecular motor driving the stepwise translocation of polypeptide chains across the membrane. In Limosilactobacillus fermentum (strain NBRC 3956 / LMG 18251) (Lactobacillus fermentum), this protein is Protein translocase subunit SecA.